The sequence spans 1888 residues: Eukaryotic translation initiation factor 4G (1888 aa).

Disordered regions lie at residues 1–259, 391–420, 449–662, 726–761, 838–903, 961–1042, 1083–1138, 1331–1356, 1462–1605, and 1639–1691; these read MSFN…PTTP, FDNK…TQPL, PLPS…SLQH, VAHS…KNSE, ADVS…DGEV, AYKR…SGDR, TNVS…DPRL, GERE…EREE, KWQQ…PGDL, and RFAG…PSLP. Composition is skewed to polar residues over residues 13–36 and 75–84; these read GYTQ…SGTH and VNSTDSSNAP. Residues 171 to 183 show a composition bias toward basic and acidic residues; sequence DEQKRDQARHESF. The span at 185-195 shows a compositional bias: pro residues; the sequence is PVPPMPIPLAP. Polar residues-rich tracts occupy residues 211 to 231, 244 to 259, 393 to 405, and 458 to 475; these read NVGQ…NTGD, ASPN…PTTP, NKQS…TGTS, and NSQP…SQNV. The segment covering 497-506 has biased composition (basic and acidic residues); the sequence is PNREHTRDTH. Polar residues predominate over residues 586–596; that stretch reads IKSSPVISKQF. Residues 603-630 show a composition bias toward low complexity; it reads VSLESQDSSSVQSSLTASSEESELAVAH. Residues 631 to 645 show a composition bias toward basic and acidic residues; sequence SEVRRENLLGSDLHK. Low complexity predominate over residues 840 to 850; the sequence is VSASVSSSSTV. The segment covering 869-885 has biased composition (polar residues); sequence NMSSNEVLKNVVKSDQP. Residues 963 to 983 show a composition bias toward basic and acidic residues; the sequence is KRPEEKKETVAHSESIERTES. The segment at 1048–1093 is EIF4E-binding; it reads KKYSRDFLLKFAEQFLDLPHNFEVTSDIESLMSTHTNVSHHHDRDP. Residues 1109 to 1124 show a composition bias toward basic and acidic residues; sequence RLDRRGSNLVDDDRWS. The region spanning 1239-1462 is the MIF4G domain; the sequence is QRQLKAILNK…KDAIDLRKNK (224 aa). 2 stretches are compositionally biased toward basic and acidic residues: residues 1467 to 1484 and 1661 to 1674; these read RKVE…DAAQ and KDLR…DRSR. An MI domain is found at 1700–1824; the sequence is RLQQLSLTAI…SLREVADLIC (125 aa).

The protein belongs to the eukaryotic initiation factor 4G family. In terms of assembly, EIF4F is a multi-subunit complex, the composition of which varies with external and internal environmental conditions. It is composed of at least EIF4A, EIF4E and EIF4G. Interacts directly with eIF4E. In higher plants two isoforms of EIF4F have been identified, named isoform EIF4F and isoform EIF(iso)4F. Isoform EIF4F has subunits p220 and p26, whereas isoform EIF(iso)4F has subunits p82 and p28.

Its function is as follows. Component of the protein complex eIF4F, which is involved in the recognition of the mRNA cap, ATP-dependent unwinding of 5'-terminal secondary structure and recruitment of mRNA to the ribosome. The chain is Eukaryotic translation initiation factor 4G from Cucumis melo (Muskmelon).